A 175-amino-acid chain; its full sequence is Myosin regulatory light chain 2, atrial isoform (175 aa).

Alanine 2 is subject to N-acetylalanine. A phosphoserine mark is found at serine 22 and serine 23. EF-hand domains lie at alanine 32–valine 67, aspartate 102–lysine 137, and phenylalanine 138–lysine 173. Positions 45, 47, 49, and 56 each coordinate Ca(2+).

As to quaternary structure, myosin is a hexamer of 2 heavy chains and 4 light chains. Predominantly expressed in adult atrial muscle.

The chain is Myosin regulatory light chain 2, atrial isoform (MYL7) from Homo sapiens (Human).